Here is a 722-residue protein sequence, read N- to C-terminus: Exocyst complex component 3-like protein 4 (722 aa).

Disordered stretches follow at residues 1-53 (MPSP…LGSL) and 92-131 (NDGPATGHSQATPEVPSGVMNGVSQQASTGAASEELKPEA). The span at 34–46 (SRKEPNAHRKDGT) shows a compositional bias: basic and acidic residues. At Ser-52 the chain carries Phosphoserine. Positions 113–122 (GVSQQASTGA) are enriched in polar residues. A Phosphoserine modification is found at Ser-513.

This sequence belongs to the SEC6 family.

In Homo sapiens (Human), this protein is Exocyst complex component 3-like protein 4 (EXOC3L4).